The primary structure comprises 348 residues: N6-Methyl-AMP deaminase (348 aa).

Residues histidine 18 and histidine 20 each coordinate Zn(2+). Residues histidine 20, asparagine 22, histidine 68, serine 100–arginine 103, aspartate 142, and glycine 175 each bind N(6)-methyl-AMP. Residue histidine 202 coordinates Zn(2+). Glutamate 205, aspartate 287, and aspartate 288 together coordinate N(6)-methyl-AMP. Glutamate 205 (proton donor) is an active-site residue. Aspartate 287 is a binding site for Zn(2+).

Belongs to the metallo-dependent hydrolases superfamily. Adenosine and AMP deaminases family. In terms of assembly, monomer. It depends on Zn(2+) as a cofactor.

The enzyme catalyses N(6)-methyl-AMP + H2O + H(+) = IMP + methylamine. Catalyzes the hydrolysis of the free cytosolic methylated adenosine nucleotide N(6)-methyl-AMP (N6-mAMP) to produce inositol monophosphate (IMP) and methylamine. Is required for the catabolism of cytosolic N6-mAMP, which is derived from the degradation of mRNA containing N6-methylated adenine (m6A). The sequence is that of N6-Methyl-AMP deaminase (mapda) from Danio rerio (Zebrafish).